The primary structure comprises 1244 residues: Protein MMS22-like (1244 aa).

The protein belongs to the MMS22 family. MMS22L subfamily. In terms of assembly, component of the MMS22L-TONSL complex, a complex at least composed of MMS22L and TONSL/NFKBIL2. Interacts with RAD51; interaction is direct. Post-translationally, degraded by the ubiquitin-proteasome system upon replication stress.

The protein resides in the nucleus. It is found in the chromosome. Functionally, component of the MMS22L-TONSL complex, a complex that promotes homologous recombination-mediated repair of double-strand breaks (DSBs) at stalled or collapsed replication forks. The MMS22L-TONSL complex is required to maintain genome integrity during DNA replication. It mediates the assembly of RAD51 filaments on single-stranded DNA (ssDNA): the MMS22L-TONSL complex is recruited to DSBs following histone replacement by histone chaperones and eviction of the replication protein A complex (RPA/RP-A) from DSBs. Following recruitment to DSBs, the TONSL-MMS22L complex promotes recruitment of RAD51 filaments and subsequent homologous recombination. Within the complex, MMS22L acts by binding ssDNA. The protein is Protein MMS22-like (MMS22L) of Bos taurus (Bovine).